The primary structure comprises 147 residues: MTLEILDIMKLLPHRYPFLLVDRIEDLEPGKRAVGIKNVTINEPFFQGHYPGHPIMPGVLIIEAMAQVGGAVAAITAGDKDDQVPYFTGINKARFRRPVGPGDVLQLQLELLSSRRGLFVFSGKAYVDGNLVAEAELKAVFAPRSQD.

His-49 is a catalytic residue.

This sequence belongs to the thioester dehydratase family. FabZ subfamily.

It localises to the cytoplasm. It carries out the reaction a (3R)-hydroxyacyl-[ACP] = a (2E)-enoyl-[ACP] + H2O. Its function is as follows. Involved in unsaturated fatty acids biosynthesis. Catalyzes the dehydration of short chain beta-hydroxyacyl-ACPs and long chain saturated and unsaturated beta-hydroxyacyl-ACPs. The chain is 3-hydroxyacyl-[acyl-carrier-protein] dehydratase FabZ from Syntrophotalea carbinolica (strain DSM 2380 / NBRC 103641 / GraBd1) (Pelobacter carbinolicus).